A 222-amino-acid polypeptide reads, in one-letter code: MLPQGLIVSCQALPDEPLHSSFIMSKMALAAYEGGAVGIRANSKADIIEIKKEVDLPVIGIVKRDYAHSDVFITATSKEIDELIESNCEVIALDATKQTRPKESLSELVSYIRNKAPNVEIMADISTLEEAKNADELGFDYVGTTLRGYTSYTKGHILYENNYQFLKDVLAHVNAKVIAEGNVITPEMFKDVTDLGVHCTVVGGAITRPKEITKRFINAFDK.

It belongs to the NanE family.

The catalysed reaction is an N-acyl-D-glucosamine 6-phosphate = an N-acyl-D-mannosamine 6-phosphate. The protein operates within amino-sugar metabolism; N-acetylneuraminate degradation; D-fructose 6-phosphate from N-acetylneuraminate: step 3/5. In terms of biological role, converts N-acetylmannosamine-6-phosphate (ManNAc-6-P) to N-acetylglucosamine-6-phosphate (GlcNAc-6-P). The protein is Putative N-acetylmannosamine-6-phosphate 2-epimerase of Staphylococcus saprophyticus subsp. saprophyticus (strain ATCC 15305 / DSM 20229 / NCIMB 8711 / NCTC 7292 / S-41).